We begin with the raw amino-acid sequence, 658 residues long: Threonine--tRNA ligase (658 aa).

Positions Met1–Thr64 constitute a TGS domain. The tract at residues Asp246–Pro548 is catalytic. Positions 343, 394, and 525 each coordinate Zn(2+).

The protein belongs to the class-II aminoacyl-tRNA synthetase family. Homodimer. Zn(2+) is required as a cofactor.

It is found in the cytoplasm. The enzyme catalyses tRNA(Thr) + L-threonine + ATP = L-threonyl-tRNA(Thr) + AMP + diphosphate + H(+). In terms of biological role, catalyzes the attachment of threonine to tRNA(Thr) in a two-step reaction: L-threonine is first activated by ATP to form Thr-AMP and then transferred to the acceptor end of tRNA(Thr). Also edits incorrectly charged L-seryl-tRNA(Thr). The protein is Threonine--tRNA ligase of Brucella melitensis biotype 2 (strain ATCC 23457).